The primary structure comprises 219 residues: ATP phosphoribosyltransferase (219 aa).

The protein belongs to the ATP phosphoribosyltransferase family. Short subfamily. Heteromultimer composed of HisG and HisZ subunits.

The protein resides in the cytoplasm. It carries out the reaction 1-(5-phospho-beta-D-ribosyl)-ATP + diphosphate = 5-phospho-alpha-D-ribose 1-diphosphate + ATP. The protein operates within amino-acid biosynthesis; L-histidine biosynthesis; L-histidine from 5-phospho-alpha-D-ribose 1-diphosphate: step 1/9. In terms of biological role, catalyzes the condensation of ATP and 5-phosphoribose 1-diphosphate to form N'-(5'-phosphoribosyl)-ATP (PR-ATP). Has a crucial role in the pathway because the rate of histidine biosynthesis seems to be controlled primarily by regulation of HisG enzymatic activity. The protein is ATP phosphoribosyltransferase of Clostridium kluyveri (strain NBRC 12016).